The primary structure comprises 221 residues: Transcription repressor OFP8 (221 aa).

Over residues 124 to 138 (EDEGDKEESEDDDSD) the composition is skewed to acidic residues. Residues 124-147 (EDEGDKEESEDDDSDTLFSSRSFS) are disordered. Residues 158–217 (VVKKSKDPYEDFRTSMVEMIVERQIFAPAELQQLLQCFLSLNSRQHHKVIVQVFLEIYAT) form the OVATE domain.

Expressed in roots, rosette and cauline leaves, shoots, stems, flower buds and siliques.

The protein localises to the nucleus. Transcriptional repressor that regulates multiple aspects of plant growth and development through the regulation of BEL1-LIKE (BLH) and KNOX TALE (KNAT) homeodomain transcription factors. In Arabidopsis thaliana (Mouse-ear cress), this protein is Transcription repressor OFP8 (OFP8).